Consider the following 238-residue polypeptide: Tetraspanin-4 (238 aa).

At 1 to 13 (MARGCLQGVKYLM) the chain is on the cytoplasmic side. The chain crosses the membrane as a helical span at residues 14-34 (FAFNLLFWLGGCGVLGVGIWL). Topologically, residues 35-55 (AATQGNFATLSSSFPSLSAAN) are extracellular. The helical transmembrane segment at 56-76 (LLIVTGTFVMAIGFVGCIGAL) threads the bilayer. Over 77 to 85 (KENKCLLLT) the chain is Cytoplasmic. The helical transmembrane segment at 86-106 (FFVLLLLVFLLEATIAVLFFA) threads the bilayer. Residues 107 to 201 (YSDKIDSYAQ…ETVKAWLQEN (95 aa)) lie on the Extracellular side of the membrane. Asn152 and Asn161 each carry an N-linked (GlcNAc...) asparagine glycan. A helical membrane pass occupies residues 202 to 222 (LLAVGIFGLCTALVQILGLTF). The Cytoplasmic portion of the chain corresponds to 223-238 (AMTMYCQVVKADTYCA).

This sequence belongs to the tetraspanin (TM4SF) family. In terms of assembly, forms a complex with integrins.

It localises to the membrane. This chain is Tetraspanin-4 (Tspan4), found in Mus musculus (Mouse).